The following is an 85-amino-acid chain: Glutaredoxin 1 (85 aa).

One can recognise a Glutaredoxin domain in the interval 1 to 85 (MQTVIFGRSG…AAWVKENLDA (85 aa)). Cysteines 11 and 14 form a disulfide.

The protein belongs to the glutaredoxin family. Monomer.

The disulfide bond functions as an electron carrier in the glutathione-dependent synthesis of deoxyribonucleotides by the enzyme ribonucleotide reductase. In addition, it is also involved in reducing some disulfides in a coupled system with glutathione reductase. The polypeptide is Glutaredoxin 1 (grxA) (Shigella flexneri).